The sequence spans 159 residues: 2-C-methyl-D-erythritol 2,4-cyclodiphosphate synthase (159 aa).

A divalent metal cation contacts are provided by Asp-8 and His-10. Residues 8 to 10 (DVH) and 34 to 35 (HS) contribute to the 4-CDP-2-C-methyl-D-erythritol 2-phosphate site. Position 42 (His-42) interacts with a divalent metal cation. Residues 56 to 58 (DIG), 61 to 65 (FPDTD), 100 to 106 (AQAPRML), 132 to 135 (TTTE), Phe-139, and Arg-142 contribute to the 4-CDP-2-C-methyl-D-erythritol 2-phosphate site.

The protein belongs to the IspF family. Homotrimer. It depends on a divalent metal cation as a cofactor.

The enzyme catalyses 4-CDP-2-C-methyl-D-erythritol 2-phosphate = 2-C-methyl-D-erythritol 2,4-cyclic diphosphate + CMP. It participates in isoprenoid biosynthesis; isopentenyl diphosphate biosynthesis via DXP pathway; isopentenyl diphosphate from 1-deoxy-D-xylulose 5-phosphate: step 4/6. Involved in the biosynthesis of isopentenyl diphosphate (IPP) and dimethylallyl diphosphate (DMAPP), two major building blocks of isoprenoid compounds. Catalyzes the conversion of 4-diphosphocytidyl-2-C-methyl-D-erythritol 2-phosphate (CDP-ME2P) to 2-C-methyl-D-erythritol 2,4-cyclodiphosphate (ME-CPP) with a corresponding release of cytidine 5-monophosphate (CMP). In Escherichia coli O6:K15:H31 (strain 536 / UPEC), this protein is 2-C-methyl-D-erythritol 2,4-cyclodiphosphate synthase.